A 667-amino-acid chain; its full sequence is NADPH--cytochrome P450 reductase (667 aa).

Topologically, residues Met-1–Asp-8 are lumenal. A helical membrane pass occupies residues Phe-9–Gly-29. The Cytoplasmic segment spans residues Thr-30–Phe-667. Residues Met-72–Trp-215 form the Flavodoxin-like domain. Residues Leu-164–Asn-173 and Asp-199 each bind FMN. In terms of domain architecture, FAD-binding FR-type spans Lys-277–Pro-511. Arg-297 lines the NADP(+) pocket. FAD is bound by residues Thr-468–Val-470 and Gly-484–Ser-487. NADP(+) contacts are provided by residues Thr-527, Ser-586 to Arg-587, and Lys-592 to Gln-596. Position 666 (Trp-666) interacts with FAD.

Belongs to the NADPH--cytochrome P450 reductase family. It in the N-terminal section; belongs to the flavodoxin family. The protein in the C-terminal section; belongs to the flavoprotein pyridine nucleotide cytochrome reductase family. It depends on FAD as a cofactor. The cofactor is FMN.

The protein resides in the endoplasmic reticulum membrane. The enzyme catalyses 2 oxidized [cytochrome P450] + NADPH = 2 reduced [cytochrome P450] + NADP(+) + H(+). Its function is as follows. This enzyme is required for electron transfer from NADP to cytochrome P450 in microsomes. It can also provide electron transfer to heme oxygenase and cytochrome B5. The sequence is that of NADPH--cytochrome P450 reductase (redB) from Dictyostelium discoideum (Social amoeba).